Reading from the N-terminus, the 583-residue chain is Selenocysteine-specific elongation factor (583 aa).

One can recognise a tr-type G domain in the interval arginine 5–threonine 203. Residues glycine 14–threonine 21 form a G1 region. GTP is bound by residues glycine 19, threonine 21, and alanine 22. Residue threonine 21 coordinates Mg(2+). The G2 stretch occupies residues glycine 46–aspartate 50. 2 residues coordinate Mg(2+): threonine 48 and aspartate 78. A G3 region spans residues aspartate 78 to glycine 81. A G4 region spans residues asparagine 132 to aspartate 135. Aspartate 135 and lysine 173 together coordinate GTP. Residues alanine 171 to lysine 173 are G5. Positions methionine 371–glycine 390 are disordered. Position 524 is a phosphoserine (serine 524). The disordered stretch occupies residues lysine 528 to valine 562. Threonine 532 carries the phosphothreonine modification. Positions threonine 534–arginine 540 match the Nuclear localization signal motif. Residues glycine 542 to glutamate 557 are compositionally biased toward basic and acidic residues. Residue arginine 543 is modified to Omega-N-methylarginine.

Belongs to the TRAFAC class translation factor GTPase superfamily. Classic translation factor GTPase family. SelB subfamily. Mg(2+) is required as a cofactor. It depends on Mn(2+) as a cofactor.

Its subcellular location is the cytoplasm. The protein resides in the nucleus. The enzyme catalyses GTP + H2O = GDP + phosphate + H(+). Translation factor required for the incorporation of the rare amino acid selenocysteine encoded by UGA codons. Replaces the eRF1-eRF3-GTP ternary complex for the insertion of selenocysteine directed by the UGA codon. Insertion of selenocysteine at UGA codons is mediated by SECISBP2 and EEFSEC: SECISBP2 (1) specifically binds the SECIS sequence once the 80S ribosome encounters an in-frame UGA codon and (2) contacts the RPS27A/eS31 of the 40S ribosome before ribosome stalling. (3) GTP-bound EEFSEC then delivers selenocysteinyl-tRNA(Sec) to the 80S ribosome and adopts a preaccommodated state conformation. (4) After GTP hydrolysis, EEFSEC dissociates from the assembly, selenocysteinyl-tRNA(Sec) accommodates, and peptide bond synthesis and selenoprotein elongation occur. The sequence is that of Selenocysteine-specific elongation factor (Eefsec) from Mus musculus (Mouse).